The primary structure comprises 339 residues: Heat-inducible transcription repressor HrcA (339 aa).

It belongs to the HrcA family.

Functionally, negative regulator of class I heat shock genes (grpE-dnaK-dnaJ and groELS operons). Prevents heat-shock induction of these operons. The protein is Heat-inducible transcription repressor HrcA of Leifsonia xyli subsp. xyli (strain CTCB07).